The following is a 234-amino-acid chain: Large ribosomal subunit protein uL1 (234 aa).

This sequence belongs to the universal ribosomal protein uL1 family. As to quaternary structure, part of the 50S ribosomal subunit.

In terms of biological role, binds directly to 23S rRNA. The L1 stalk is quite mobile in the ribosome, and is involved in E site tRNA release. Its function is as follows. Protein L1 is also a translational repressor protein, it controls the translation of the L11 operon by binding to its mRNA. This Anaeromyxobacter dehalogenans (strain 2CP-1 / ATCC BAA-258) protein is Large ribosomal subunit protein uL1.